Consider the following 62-residue polypeptide: Large ribosomal subunit protein bL28 (62 aa).

It belongs to the bacterial ribosomal protein bL28 family.

This Streptococcus agalactiae serotype Ia (strain ATCC 27591 / A909 / CDC SS700) protein is Large ribosomal subunit protein bL28.